The chain runs to 551 residues: Probable aldehyde dehydrogenase (551 aa).

Residue 278 to 283 coordinates NAD(+); that stretch reads GSSRVA. The active-site Proton acceptor is E297. The active-site Nucleophile is the C332.

This sequence belongs to the aldehyde dehydrogenase family. In terms of tissue distribution, in uninfected plants, highest levels found in stems. In plants infected with the flax rust, highest levels in leaves. Higher levels of expression in infected leaves than uninfected stems.

The catalysed reaction is an aldehyde + NAD(+) + H2O = a carboxylate + NADH + 2 H(+). In terms of biological role, could be involved in facilitating the biotrophic relationship between the plant and the rust fungus. This chain is Probable aldehyde dehydrogenase (FIS1), found in Linum usitatissimum (Flax).